A 442-amino-acid chain; its full sequence is tRNA modification GTPase MnmE (442 aa).

Residues R27, E84, and K124 each contribute to the (6S)-5-formyl-5,6,7,8-tetrahydrofolate site. One can recognise a TrmE-type G domain in the interval G221 to E366. Residues N231 to S236, S250 to T256, and D275 to G278 each bind GTP. Mg(2+) is bound by residues S235 and T256. K442 lines the (6S)-5-formyl-5,6,7,8-tetrahydrofolate pocket.

It belongs to the TRAFAC class TrmE-Era-EngA-EngB-Septin-like GTPase superfamily. TrmE GTPase family. As to quaternary structure, homodimer. Heterotetramer of two MnmE and two MnmG subunits. The cofactor is K(+).

The protein localises to the cytoplasm. Its function is as follows. Exhibits a very high intrinsic GTPase hydrolysis rate. Involved in the addition of a carboxymethylaminomethyl (cmnm) group at the wobble position (U34) of certain tRNAs, forming tRNA-cmnm(5)s(2)U34. The sequence is that of tRNA modification GTPase MnmE from Brucella suis biovar 1 (strain 1330).